A 426-amino-acid chain; its full sequence is Serine--tRNA ligase (426 aa).

Thr-232–Glu-234 provides a ligand contact to L-serine. Residue Arg-263–Glu-265 coordinates ATP. Residue Glu-286 participates in L-serine binding. An ATP-binding site is contributed by Glu-350 to Ser-353. Ser-385 is an L-serine binding site.

This sequence belongs to the class-II aminoacyl-tRNA synthetase family. Type-1 seryl-tRNA synthetase subfamily. In terms of assembly, homodimer. The tRNA molecule binds across the dimer.

The protein resides in the cytoplasm. The enzyme catalyses tRNA(Ser) + L-serine + ATP = L-seryl-tRNA(Ser) + AMP + diphosphate + H(+). It catalyses the reaction tRNA(Sec) + L-serine + ATP = L-seryl-tRNA(Sec) + AMP + diphosphate + H(+). The protein operates within aminoacyl-tRNA biosynthesis; selenocysteinyl-tRNA(Sec) biosynthesis; L-seryl-tRNA(Sec) from L-serine and tRNA(Sec): step 1/1. Its function is as follows. Catalyzes the attachment of serine to tRNA(Ser). Is also able to aminoacylate tRNA(Sec) with serine, to form the misacylated tRNA L-seryl-tRNA(Sec), which will be further converted into selenocysteinyl-tRNA(Sec). The protein is Serine--tRNA ligase of Pediococcus pentosaceus (strain ATCC 25745 / CCUG 21536 / LMG 10740 / 183-1w).